The following is a 507-amino-acid chain: MKKVSINGNDLTLEEMIMVAREYCSITIEPEAMVRVANTRKVVERYVEEERVVYGITTGFGKFSDVAISKDQTEMLQRNLIISHACGVGEPLKEEVVRGVLLLRANALAKGYSGVRPNTLETLINMLNKGVHPIIPEKGSLGSSGDLAPLAHMVLVMMGEGEATYKGNKMSGKEAMEKAGIPPVVLSAKEGLALINGTQVMTAIGALLIYDCQKLIKLADIAGALTLEAQRGIIDAFDHKVHRVRPHQGQQQTAQNIVNLVAGSTLITRQGEVRVQDAYTLRCIPQIHGASRDAIMYAVDKVNIEINGATDNPLIFPEEDEVISGGNFHGQPMALTFDFLGIAIAELANVSERRIERLVNPQLSGLPAFLTAKGGLNSGFMITQYAAASLVSENKILAHPASVDSIPSSANQEDHVSMGTIAARKARSIYENTVNVLGVELMAASQAVEFYDGYELGIGTRRAYDTIRKSVAHLDEDRVMYVDMNRCAELVFNHKIVDEVEKVVSIL.

The segment at residues 143–145 is a cross-link (5-imidazolinone (Ser-Gly)); the sequence is SSG. S144 is subject to 2,3-didehydroalanine (Ser).

The protein belongs to the PAL/histidase family. Contains an active site 4-methylidene-imidazol-5-one (MIO), which is formed autocatalytically by cyclization and dehydration of residues Ser-Ser-Gly.

The protein localises to the cytoplasm. The catalysed reaction is L-histidine = trans-urocanate + NH4(+). It functions in the pathway amino-acid degradation; L-histidine degradation into L-glutamate; N-formimidoyl-L-glutamate from L-histidine: step 1/3. The sequence is that of Histidine ammonia-lyase from Alkaliphilus metalliredigens (strain QYMF).